The primary structure comprises 113 residues: Prefoldin subunit beta (113 aa).

Belongs to the prefoldin subunit beta family. As to quaternary structure, heterohexamer of two alpha and four beta subunits.

It localises to the cytoplasm. Molecular chaperone capable of stabilizing a range of proteins. Seems to fulfill an ATP-independent, HSP70-like function in archaeal de novo protein folding. This chain is Prefoldin subunit beta, found in Methanococcus maripaludis (strain DSM 14266 / JCM 13030 / NBRC 101832 / S2 / LL).